Here is a 497-residue protein sequence, read N- to C-terminus: L-carnitine dehydrogenase/betainyl-CoA thioesterase (497 aa).

Residues 1–335 form an L-carnitine dehydrogenase region; sequence MSFITKAACV…AKLWANARKP (335 aa). Residue 11-16 coordinates NAD(+); that stretch reads GGGVIG. An important for dehydrogenase activity region spans residues 330-335; the sequence is ANARKP. Residues 336 to 497 are betainyl-CoA thioesterase; that stretch reads EADLGDVKPL…AGRFVGQKRA (162 aa).

This sequence in the N-terminal section; belongs to the 3-hydroxyacyl-CoA dehydrogenase family. L-carnitine dehydrogenase subfamily. The protein in the C-terminal section; belongs to the betainyl-CoA thioesterase family. As to quaternary structure, homodimer.

It is found in the cytoplasm. The enzyme catalyses carnitine + NAD(+) = 3-dehydrocarnitine + NADH + H(+). It catalyses the reaction N,N,N-trimethylglycyl-CoA + H2O = glycine betaine + CoA + H(+). The protein operates within amine and polyamine metabolism; carnitine metabolism. Its function is as follows. Catalyzes the NAD(+)-dependent oxidation of L-carnitine to 3-dehydrocarnitine. Probably also catalyzes the cleavage of betainyl-CoA (N,N,N-trimethylglycyl-CoA) into glycine betaine and coenzyme A. Despite a high similarity to 3-hydroxyacyl-CoA dehydrogenases, cannot dehydrogenate 3-hydroxybutylate and 3-hydroxybutyl-CoA. Is probably involved in a L-carnitine degradation pathway that allows Rhizobium sp. YS-240 to grow on L-carnitine as the sole source of carbon and nitrogen. The polypeptide is L-carnitine dehydrogenase/betainyl-CoA thioesterase (Rhizobium sp).